Consider the following 130-residue polypeptide: Holo-[acyl-carrier-protein] synthase (130 aa).

The Mg(2+) site is built by Asp-8 and Glu-62.

Belongs to the P-Pant transferase superfamily. AcpS family. Mg(2+) is required as a cofactor.

It is found in the cytoplasm. It catalyses the reaction apo-[ACP] + CoA = holo-[ACP] + adenosine 3',5'-bisphosphate + H(+). Functionally, transfers the 4'-phosphopantetheine moiety from coenzyme A to a Ser of acyl-carrier-protein. This chain is Holo-[acyl-carrier-protein] synthase, found in Polynucleobacter asymbioticus (strain DSM 18221 / CIP 109841 / QLW-P1DMWA-1) (Polynucleobacter necessarius subsp. asymbioticus).